The chain runs to 584 residues: MSVNDWAFLVLIGVILALLLIPTGEFMFRVYTGKKTFLSPLFVPVEAWILKACGAGSDEEMDWKSFAVAMMIFSVIGIVFVFILQEVQQFLPLNPLGATAVPWDLSLNTAVSFATNTNWQFYVPETTVSYLTQMIGLTVQNFMSAAVGMVVLVAFIYGFSRRSSHTIGNFWVLLLRSIWILLPLSFVIALVLVSQGAPQTLSGPVTVPLLNATNDSGGNIITTQLISLGPAASQIAVKMLGTNGGGFFNANSAHPFENPTWFTDLVEIVAILLIPVSLCFMFGKMIGSVKKGIAILIAMMILFVPLLGLGIWSEIGGNPAFTPLGISQAPSHLQSGGNMEGKEVRFGPVQSAAFSVITTVTSCGAVNSMHDSFMPLGGLVQIFDIQLGEIVFGGVGSGLYCMLVFVIIAMFIAGLMVGRTPELYGKKIEPYEMKLSTIHILIPIFLILIGTAIAVSITAGTSMTANPGPHGFSEILYAFSSVSQNNGSAFAGLSSDTFYNLTTAFCMFVGRYAIAIITLALAGAFVAKKIVPPGEGTLQDHRPLFIIWVVFTILIIGALSFLPALSLGPVVEFLIQMGRGVIHV.

Helical transmembrane passes span 8–28, 65–85, 139–159, 172–192, 262–282, 292–312, 398–418, 440–460, 507–527, and 544–564; these read FLVL…EFMF, SFAV…FILQ, VQNF…IYGF, VLLL…ALVL, FTDL…CFMF, GIAI…LGIW, GLYC…LMVG, ILIP…ITAG, MFVG…AFVA, and LFII…FLPA.

Belongs to the KdpA family. In terms of assembly, the system is composed of three essential subunits: KdpA, KdpB and KdpC.

It is found in the cell membrane. Its function is as follows. Part of the high-affinity ATP-driven potassium transport (or Kdp) system, which catalyzes the hydrolysis of ATP coupled with the electrogenic transport of potassium into the cytoplasm. This subunit binds the extracellular potassium ions and delivers the ions to the membrane domain of KdpB through an intramembrane tunnel. This is Potassium-transporting ATPase potassium-binding subunit from Methanoregula boonei (strain DSM 21154 / JCM 14090 / 6A8).